A 170-amino-acid polypeptide reads, in one-letter code: Transmembrane protein 252 (170 aa).

Transmembrane regions (helical) follow at residues 8–28 (ILCALALLMGFLMVCLGAFFI) and 40–60 (LIAAYLLLPLGFVILLSGIFW). Residues 112 to 147 (CPAEREASGIPPPLYTETGLEFQDGNDSHPEAPPSY) form a disordered region.

It localises to the membrane. This is Transmembrane protein 252 (TMEM252) from Pongo abelii (Sumatran orangutan).